The chain runs to 585 residues: Mitochondrial sodium/calcium exchanger protein (585 aa).

A signal peptide spans 1–26 (MASRWLALLWAPVFLCVALILETASG). Over 27–95 (TGDPSTKAHG…GIFCYFPPNL (69 aa)) the chain is Extracellular. Residue Asn-46 is glycosylated (N-linked (GlcNAc...) asparagine). A helical membrane pass occupies residues 96–116 (LPLAITLYVFWLLYLFLILGV). Residues 117-140 (TAAKFFCPNLSAISTNLKLSHNVA) are Cytoplasmic-facing. Residues 141–161 (GVTFLAFGNGAPDIFSALVAF) form a helical membrane-spanning segment. At 162–168 (SDPRTAG) the chain is on the extracellular side. A helical membrane pass occupies residues 169–189 (LAIGALFGAGVLVTTVVAGGI). The Cytoplasmic segment spans residues 190-205 (TILHPFMAASRPFLRD). The helical transmembrane segment at 206–226 (IAFYMVAVFLTFTALYLGRIT) threads the bilayer. At 227–229 (LTW) the chain is on the extracellular side. A helical transmembrane segment spans residues 230-250 (ALGYLGLYVFYVVTVIICTWV). Residues 251–325 (YQRQRSRSLV…KWRTQSISWR (75 aa)) are Cytoplasmic-facing. Ser-258 bears the Phosphoserine; by PKA mark. The chain crosses the membrane as a helical span at residues 326–346 (VLKVVKLPVEFLLLLTVPVVD). Topologically, residues 347–360 (PDKDDRNWKRPLNC) are extracellular. A helical transmembrane segment spans residues 361 to 381 (LQLVISPLVLVLTLQSGVYGI). At 382–383 (YE) the chain is on the cytoplasmic side. A helical transmembrane segment spans residues 384-404 (IGGLLPVWAVVVIVGTALASV). At 405-416 (TFFATSNREPPR) the chain is on the extracellular side. A helical membrane pass occupies residues 417 to 437 (LHWLFAFLGFLTSALWINAAA). At 438–445 (TEVVNILR) the chain is on the cytoplasmic side. Residues 446–466 (SLGVIFRLSNTVLGLTLLAWG) traverse the membrane as a helical segment. The Extracellular segment spans residues 467–491 (NSIGDAFSDFTLARQGYPRMAFSAC). A helical membrane pass occupies residues 492 to 512 (FGGIIFNILVGVGLGCLLQII). Residues 513–525 (RNHVVEVKLEPDG) are Cytoplasmic-facing. Residues 526 to 546 (LLVWVLASALGLSLIFSLVSV) form a helical membrane-spanning segment. The Extracellular segment spans residues 547–559 (PLQCFQLSKAYGL). Residues 560 to 580 (CLLLFYICFLVVVLLTEFGVI) form a helical membrane-spanning segment. The Cytoplasmic segment spans residues 581–585 (HLKKA).

Belongs to the Ca(2+):cation antiporter (CaCA) (TC 2.A.19) family. SLC24A subfamily. Phosphorylation at Ser-258 by PKA prevents calcium overload. As to expression, ubiquitously expressed. Expressed in dental tissues.

It is found in the mitochondrion inner membrane. Its subcellular location is the cell membrane. The catalysed reaction is Ca(2+)(in) + 3 Na(+)(out) = Ca(2+)(out) + 3 Na(+)(in). It carries out the reaction 3 Li(+)(out) + Ca(2+)(in) = 3 Li(+)(in) + Ca(2+)(out). Inhibited by the sodium/calcium exchanger inhibitor CGP-37157. Strongly inhibited by zinc. Its function is as follows. Mitochondrial sodium/calcium antiporter that mediates sodium-dependent calcium efflux from mitochondrion, by mediating the exchange of 3 sodium ions per 1 calcium ion. Plays a central role in mitochondrial calcium homeostasis by mediating mitochondrial calcium extrusion: calcium efflux is essential for mitochondrial function and cell survival, notably in cardiomyocytes. Regulates rates of glucose-dependent insulin secretion in pancreatic beta-cells during the first phase of insulin secretion: acts by mediating efflux of calcium from mitochondrion, thereby affecting cytoplasmic calcium responses. Required for store-operated Ca(2+) entry (SOCE) and Ca(2+) release-activated Ca(2+) (CRAC) channel regulation: sodium transport by SLC8B1 leads to promote calcium-shuttling that modulates mitochondrial redox status, thereby regulating SOCE activity. Involved in B-lymphocyte chemotaxis. Able to transport Ca(2+) in exchange of either Li(+) or Na(+), explaining how Li(+) catalyzes Ca(2+) exchange. In contrast to other members of the family its function is independent of K(+). The chain is Mitochondrial sodium/calcium exchanger protein from Mus musculus (Mouse).